The chain runs to 104 residues: MESKMKVLKLFRTLHRTRQCVFQNDHRALEAARQRINEEFKKNKRECSPAKISELLKFGTDVEILLRTSVVQGIHKDSDTLVLQARKDLLLDNIPFCDAPEKQT.

Positions 21 to 48 form a coiled coil; that stretch reads VFQNDHRALEAARQRINEEFKKNKRECS.

The protein belongs to the complex I LYR family. In terms of assembly, interacts with UQCRFS1.

It localises to the mitochondrion matrix. Its function is as follows. Assembly factor required for Rieske Fe-S protein UQCRFS1 incorporation into the cytochrome b-c1 (CIII) complex. Functions as a chaperone, binding to this subunit within the mitochondrial matrix and stabilizing it prior to its translocation and insertion into the late CIII dimeric intermediate within the mitochondrial inner membrane. The sequence is that of Complex III assembly factor LYRM7 (lyrm7) from Xenopus laevis (African clawed frog).